The sequence spans 522 residues: Amine oxidase [flavin-containing] (522 aa).

At 1-492 (MTAQNTFDVI…FWERNLPSVG (492 aa)) the chain is on the cytoplasmic side. The residue at position 399 (Cys-399) is an S-8alpha-FAD cysteine. The helical; Anchor for type IV membrane protein transmembrane segment at 493-513 (GFINFLAASVLSVATAAGMLA) threads the bilayer. Over 514-522 (YQKGLLTRS) the chain is Mitochondrial intermembrane.

Belongs to the flavin monoamine oxidase family. FAD serves as cofactor.

Its subcellular location is the mitochondrion outer membrane. The catalysed reaction is a secondary aliphatic amine + O2 + H2O = a primary amine + an aldehyde + H2O2. Catalyzes the oxidative deamination of biogenic and xenobiotic amines and has important functions in the metabolism of neuroactive and vasoactive amines in the central nervous system and peripheral tissues. Oxidizes both 5-hydroxytryptamine (5-HT) and beta-phenylethylamine (PEA). The polypeptide is Amine oxidase [flavin-containing] (mao) (Oncorhynchus mykiss (Rainbow trout)).